The chain runs to 315 residues: CID domain-containing protein 1 (315 aa).

A CID domain is found at 1 to 135 (MADFTEQTLR…RLHEVHQQVK (135 aa)). Positions 227–273 (MLEEYVKRLKNETNERETLESNLNMLIENVRMSIEHHEKLCREVKRR) form a coiled coil.

In Caenorhabditis elegans, this protein is CID domain-containing protein 1 (cids-1).